Here is a 76-residue protein sequence, read N- to C-terminus: Serine palmitoyltransferase small subunit B (76 aa).

The Cytoplasmic segment spans residues 1-11 (MDFKRVKEYFA). A helical transmembrane segment spans residues 12–29 (WLYYQYQIITCCAVMEPW). Residues 30 to 36 (EQSMLNT) are Lumenal-facing. The helical transmembrane segment at 37 to 57 (IILTIVAMVVYTAYVFIPIHI) threads the bilayer. Over 58–76 (RLAWEFFSKICGYDSSISN) the chain is Cytoplasmic.

It belongs to the SPTSS family. SPTSSB subfamily. In terms of assembly, component of the serine palmitoyltransferase (SPT) complex, which is composed of SPTLC1, SPTLC2 or SPTLC3 and SPTSSA or SPTSSB. The heterodimer consisting of SPTLC1 and SPTLC2/SPTLC3 forms the catalytic core of the enzyme, while SPTSSA or SPTSSB subunits determine substrate specificity. SPT also interacts with ORMDL proteins, especially ORMDL3, which negatively regulate SPT activity in the presence of ceramides. Expression is strong in hypogonadal (hpg) mouse prostate, weak in mature castrated mouse prostate and absent in normal intact or androgen-replaced hpg mouse prostates.

It is found in the endoplasmic reticulum membrane. The protein operates within lipid metabolism; sphingolipid metabolism. Component of the serine palmitoyltransferase multisubunit enzyme (SPT) that catalyzes the initial and rate-limiting step in sphingolipid biosynthesis by condensing L-serine and activated acyl-CoA (most commonly palmitoyl-CoA) to form long-chain bases. The SPT complex is composed of SPTLC1, SPTLC2 or SPTLC3 and SPTSSA or SPTSSB. Within this complex, the heterodimer consisting of SPTLC1 and SPTLC2/SPTLC3 forms the catalytic core. Within the SPT complex, SPTSSB stimulates the catalytic activity and plays a role in substrate specificity. SPT complexes with this subunit showing a preference for longer acyl-CoAs. The SPTLC1-SPTLC2-SPTSSB complex shows a strong preference for C18-CoA substrate, while the SPTLC1-SPTLC3-SPTSSB isozyme displays an ability to use a broader range of acyl-CoAs, without apparent preference. This Mus musculus (Mouse) protein is Serine palmitoyltransferase small subunit B (Sptssb).